The following is a 1058-amino-acid chain: Carbamoyl phosphate synthase large chain (1058 aa).

The interval 1–401 (MPKRTDIQKI…SLLKACRSLE (401 aa)) is carboxyphosphate synthetic domain. The ATP site is built by arginine 129, arginine 169, glycine 175, glycine 176, arginine 208, isoleucine 210, glutamate 215, glycine 241, isoleucine 242, histidine 243, glutamine 284, and glutamate 298. The ATP-grasp 1 domain maps to 133–327 (KQLMEELEQP…IAKLAAKIAV (195 aa)). Mg(2+) is bound by residues glutamine 284, glutamate 298, and asparagine 300. Residues glutamine 284, glutamate 298, and asparagine 300 each coordinate Mn(2+). The interval 402 to 546 (IGVHHNEIPE…YSTYGWENES (145 aa)) is oligomerization domain. A carbamoyl phosphate synthetic domain region spans residues 547–929 (IRSDKESVLV…ALYKAFEASY (383 aa)). An ATP-grasp 2 domain is found at 671 to 861 (EQALKELDIP…MAQVATKLIL (191 aa)). The ATP site is built by arginine 707, serine 746, isoleucine 748, glutamate 752, glycine 777, valine 778, histidine 779, serine 780, glutamine 820, and glutamate 832. Mg(2+) is bound by residues glutamine 820, glutamate 832, and asparagine 834. Residues glutamine 820, glutamate 832, and asparagine 834 each contribute to the Mn(2+) site. One can recognise an MGS-like domain in the interval 930–1058 (LHLPTFGNVV…ESRSFVTEAI (129 aa)). Residues 930–1058 (LHLPTFGNVV…ESRSFVTEAI (129 aa)) are allosteric domain.

This sequence belongs to the CarB family. In terms of assembly, composed of two chains; the small (or glutamine) chain promotes the hydrolysis of glutamine to ammonia, which is used by the large (or ammonia) chain to synthesize carbamoyl phosphate. Tetramer of heterodimers (alpha,beta)4. Mg(2+) serves as cofactor. Mn(2+) is required as a cofactor.

It catalyses the reaction hydrogencarbonate + L-glutamine + 2 ATP + H2O = carbamoyl phosphate + L-glutamate + 2 ADP + phosphate + 2 H(+). It carries out the reaction hydrogencarbonate + NH4(+) + 2 ATP = carbamoyl phosphate + 2 ADP + phosphate + 2 H(+). The protein operates within amino-acid biosynthesis; L-arginine biosynthesis; carbamoyl phosphate from bicarbonate: step 1/1. It participates in pyrimidine metabolism; UMP biosynthesis via de novo pathway; (S)-dihydroorotate from bicarbonate: step 1/3. In terms of biological role, large subunit of the glutamine-dependent carbamoyl phosphate synthetase (CPSase). CPSase catalyzes the formation of carbamoyl phosphate from the ammonia moiety of glutamine, carbonate, and phosphate donated by ATP, constituting the first step of 2 biosynthetic pathways, one leading to arginine and/or urea and the other to pyrimidine nucleotides. The large subunit (synthetase) binds the substrates ammonia (free or transferred from glutamine from the small subunit), hydrogencarbonate and ATP and carries out an ATP-coupled ligase reaction, activating hydrogencarbonate by forming carboxy phosphate which reacts with ammonia to form carbamoyl phosphate. In Streptococcus pneumoniae serotype 19F (strain G54), this protein is Carbamoyl phosphate synthase large chain.